Reading from the N-terminus, the 285-residue chain is OPEP-3 protein (285 aa).

The protein is OPEP-3 protein (OPEP-3) of Orgyia pseudotsugata multicapsid polyhedrosis virus (OpMNPV).